Reading from the N-terminus, the 186-residue chain is dCTP deaminase (186 aa).

107–112 (KSTYAR) contributes to the dCTP binding site. E133 functions as the Proton donor/acceptor in the catalytic mechanism. Residues Q152, Y166, and Q176 each contribute to the dCTP site.

It belongs to the dCTP deaminase family. As to quaternary structure, homotrimer.

The catalysed reaction is dCTP + H2O + H(+) = dUTP + NH4(+). Its pathway is pyrimidine metabolism; dUMP biosynthesis; dUMP from dCTP (dUTP route): step 1/2. In terms of biological role, catalyzes the deamination of dCTP to dUTP. This Campylobacter jejuni subsp. jejuni serotype O:6 (strain 81116 / NCTC 11828) protein is dCTP deaminase.